A 1051-amino-acid chain; its full sequence is Putative transcription factor SEF1 (1051 aa).

The segment covering 1–10 (MSTDVSERGA) has biased composition (basic and acidic residues). Disordered regions lie at residues 1 to 54 (MSTD…SEES) and 67 to 90 (GQAS…RPVT). Residues 11–21 (EAGSSSGLLSS) are compositionally biased toward low complexity. A DNA-binding region (zn(2)-C6 fungal-type) is located at residues 92–122 (CTHCRQHKIKCNASENFPSSCSRCERMGLQC). Residues 206-218 (SSVKSSVNTPSGS) are compositionally biased toward low complexity. Disordered stretches follow at residues 206 to 227 (SSVK…VDVS), 738 to 759 (EKNR…TEKR), and 927 to 968 (ASGN…QPAP).

Its subcellular location is the nucleus. Its function is as follows. Putative transcription factor. This Eremothecium gossypii (strain ATCC 10895 / CBS 109.51 / FGSC 9923 / NRRL Y-1056) (Yeast) protein is Putative transcription factor SEF1 (SEF1).